Consider the following 264-residue polypeptide: Adenosylcobinamide-GDP ribazoletransferase (264 aa).

7 helical membrane passes run 10–30, 43–63, 113–133, 141–161, 183–203, 205–225, and 243–263; these read LFFIALQFFTRVPVPAWVGYT, LVGAWVGGVAALVLWLAAQVW, LGSYGALGLVGVLGLKAVALY, VQALIALVWAHAVSRAVPVAL, VSDAGLAAALGWAALACAAAW, LGASAFTLACAALGVIALAAF, and GAAQQLCELAAYLGWLAGVWF.

It belongs to the CobS family. It depends on Mg(2+) as a cofactor.

It localises to the cell inner membrane. The enzyme catalyses alpha-ribazole + adenosylcob(III)inamide-GDP = adenosylcob(III)alamin + GMP + H(+). It carries out the reaction alpha-ribazole 5'-phosphate + adenosylcob(III)inamide-GDP = adenosylcob(III)alamin 5'-phosphate + GMP + H(+). It participates in cofactor biosynthesis; adenosylcobalamin biosynthesis; adenosylcobalamin from cob(II)yrinate a,c-diamide: step 7/7. In terms of biological role, joins adenosylcobinamide-GDP and alpha-ribazole to generate adenosylcobalamin (Ado-cobalamin). Also synthesizes adenosylcobalamin 5'-phosphate from adenosylcobinamide-GDP and alpha-ribazole 5'-phosphate. The polypeptide is Adenosylcobinamide-GDP ribazoletransferase (Leptothrix cholodnii (strain ATCC 51168 / LMG 8142 / SP-6) (Leptothrix discophora (strain SP-6))).